Consider the following 516-residue polypeptide: MAQINNMAQGIQTLNPNSNFHKPQVPKSSSFLVFGSKKLKNSANSMLVLKKDSIFMQKFCSFRISASVATAQKPSEIVLQPIKEISGTVKLPGSKSLSNRILLLAALSEGTTVVDNLLSSDDIHYMLGALKTLGLHVEEDSANQRAVVEGCGGLFPVGKESKEEIQLFLGNAGTAMRPLTAAVTVAGGNSRYVLDGVPRMRERPISDLVDGLKQLGAEVDCFLGTKCPPVRIVSKGGLPGGKVKLSGSISSQYLTALLMAAPLALGDVEIEIIDKLISVPYVEMTLKLMERFGISVEHSSSWDRFFVRGGQKYKSPGKAFVEGDASSASYFLAGAAVTGGTITVEGCGTNSLQGDVKFAEVLEKMGAEVTWTENSVTVKGPPRSSSGRKHLRAIDVNMNKMPDVAMTLAVVALYADGPTAIRDVASWRVKETERMIAICTELRKLGATVEEGPDYCIITPPEKLNVTDIDTYDDHRMAMAFSLAACADVPVTINDPGCTRKTFPNYFDVLQQYSKH.

Residues 1-72 constitute a chloroplast transit peptide; that stretch reads MAQINNMAQG…RISASVATAQ (72 aa). 3 residues coordinate 3-phosphoshikimate: Lys95, Ser96, and Arg100. Lys95 lines the phosphoenolpyruvate pocket. Residues Gly173 and Arg203 each contribute to the phosphoenolpyruvate site. Residues Ser250, Ser251, Gln252, Ser278, Asp403, and Lys430 each coordinate 3-phosphoshikimate. Gln252 is a binding site for phosphoenolpyruvate. The active-site Proton acceptor is the Asp403. The phosphoenolpyruvate site is built by Arg434, Arg476, and Lys501.

This sequence belongs to the EPSP synthase family. Mostly expressed in flower petals, and, to a lower extent, in roots, stems and anthers, but barely in leaves.

Its subcellular location is the plastid. The protein localises to the chloroplast. The enzyme catalyses 3-phosphoshikimate + phosphoenolpyruvate = 5-O-(1-carboxyvinyl)-3-phosphoshikimate + phosphate. The protein operates within metabolic intermediate biosynthesis; chorismate biosynthesis; chorismate from D-erythrose 4-phosphate and phosphoenolpyruvate: step 6/7. With respect to regulation, competitively inhibited by glyphosate. Functionally, catalyzes the transfer of the enolpyruvyl moiety of phosphoenolpyruvate (PEP) to the 5-hydroxyl of shikimate-3-phosphate (S3P) to produce enolpyruvyl shikimate-3-phosphate and inorganic phosphate. Involved in the accumulation of volatile benzoides in flowers, scent attracting pollinators (e.g. the night-active hawkmoth pollinator Manduca sexta). The protein is 3-phosphoshikimate 1-carboxyvinyltransferase, chloroplastic of Petunia hybrida (Petunia).